A 263-amino-acid polypeptide reads, in one-letter code: Putative S-adenosyl-L-methionine-dependent methyltransferase Mjls_0079 (263 aa).

S-adenosyl-L-methionine is bound by residues aspartate 121 and 150 to 151; that span reads ES.

Belongs to the UPF0677 family.

Its function is as follows. Exhibits S-adenosyl-L-methionine-dependent methyltransferase activity. The protein is Putative S-adenosyl-L-methionine-dependent methyltransferase Mjls_0079 of Mycobacterium sp. (strain JLS).